The sequence spans 57 residues: Small nuclear protein PRAC1 (57 aa).

A disordered region spans residues 38–57; the sequence is RSDGSACNSGISGGRGRKIP.

As to expression, highly expressed in prostate, rectum, and distal colon, and weakly expressed in bladder. Expressed in prostate cancer cell lines.

It localises to the nucleus. This chain is Small nuclear protein PRAC1 (PRAC1), found in Homo sapiens (Human).